The following is an 873-amino-acid chain: DNA mismatch repair protein MutS (873 aa).

ATP is bound at residue 625-632 (GPNMGGKS).

The protein belongs to the DNA mismatch repair MutS family.

In terms of biological role, this protein is involved in the repair of mismatches in DNA. It is possible that it carries out the mismatch recognition step. This protein has a weak ATPase activity. The polypeptide is DNA mismatch repair protein MutS (Xanthomonas oryzae pv. oryzae (strain KACC10331 / KXO85)).